The chain runs to 82 residues: ATP synthase subunit c, chloroplastic (82 aa).

N-formylmethionine is present on Met-1. The next 2 helical transmembrane spans lie at 3–23 (PIVA…AAIG) and 57–77 (FAFM…LLFA).

This sequence belongs to the ATPase C chain family. In terms of assembly, F-type ATPases have 2 components, F(1) - the catalytic core - and F(0) - the membrane proton channel. F(1) has five subunits: alpha(3), beta(3), gamma(1), delta(1), epsilon(1). F(0) has four main subunits: a(1), b(1), b'(1) and c(10-14). The alpha and beta chains form an alternating ring which encloses part of the gamma chain. F(1) is attached to F(0) by a central stalk formed by the gamma and epsilon chains, while a peripheral stalk is formed by the delta, b and b' chains.

Its subcellular location is the plastid. The protein localises to the chloroplast thylakoid membrane. Functionally, f(1)F(0) ATP synthase produces ATP from ADP in the presence of a proton or sodium gradient. F-type ATPases consist of two structural domains, F(1) containing the extramembraneous catalytic core and F(0) containing the membrane proton channel, linked together by a central stalk and a peripheral stalk. During catalysis, ATP synthesis in the catalytic domain of F(1) is coupled via a rotary mechanism of the central stalk subunits to proton translocation. In terms of biological role, key component of the F(0) channel; it plays a direct role in translocation across the membrane. A homomeric c-ring of between 10-14 subunits forms the central stalk rotor element with the F(1) delta and epsilon subunits. The polypeptide is ATP synthase subunit c, chloroplastic (Chlamydomonas reinhardtii (Chlamydomonas smithii)).